A 175-amino-acid polypeptide reads, in one-letter code: Endoribonuclease YbeY (175 aa).

Residues His137, His141, and His147 each contribute to the Zn(2+) site.

The protein belongs to the endoribonuclease YbeY family. The cofactor is Zn(2+).

The protein localises to the cytoplasm. In terms of biological role, single strand-specific metallo-endoribonuclease involved in late-stage 70S ribosome quality control and in maturation of the 3' terminus of the 16S rRNA. This Burkholderia ambifaria (strain ATCC BAA-244 / DSM 16087 / CCUG 44356 / LMG 19182 / AMMD) (Burkholderia cepacia (strain AMMD)) protein is Endoribonuclease YbeY.